A 368-amino-acid polypeptide reads, in one-letter code: tRNA/tmRNA (uracil-C(5))-methyltransferase (368 aa).

Glutamine 190, tyrosine 218, asparagine 223, glutamate 239, and aspartate 301 together coordinate S-adenosyl-L-methionine. Cysteine 326 acts as the Nucleophile in catalysis. Residue glutamate 360 is the Proton acceptor of the active site.

It belongs to the class I-like SAM-binding methyltransferase superfamily. RNA M5U methyltransferase family. TrmA subfamily.

The enzyme catalyses uridine(54) in tRNA + S-adenosyl-L-methionine = 5-methyluridine(54) in tRNA + S-adenosyl-L-homocysteine + H(+). The catalysed reaction is uridine(341) in tmRNA + S-adenosyl-L-methionine = 5-methyluridine(341) in tmRNA + S-adenosyl-L-homocysteine + H(+). In terms of biological role, dual-specificity methyltransferase that catalyzes the formation of 5-methyluridine at position 54 (m5U54) in all tRNAs, and that of position 341 (m5U341) in tmRNA (transfer-mRNA). The protein is tRNA/tmRNA (uracil-C(5))-methyltransferase of Photobacterium profundum (strain SS9).